A 467-amino-acid polypeptide reads, in one-letter code: Cytochrome P450 76A1 (467 aa).

Position 410 (cysteine 410) interacts with heme.

The protein belongs to the cytochrome P450 family. Heme is required as a cofactor.

The protein is Cytochrome P450 76A1 (CYP76A1) of Solanum melongena (Eggplant).